The following is a 1337-amino-acid chain: ATP-dependent helicase/nuclease subunit A (1337 aa).

A UvrD-like helicase ATP-binding domain is found at 3 to 484 (FTPSKEQEPA…LDLSDNYRSR (482 aa)). 24 to 31 (ASAGSGKT) contributes to the ATP binding site. The 346-residue stretch at 522–867 (ADRDQASPAT…NVMTIHKSKG (346 aa)) folds into the UvrD-like helicase C-terminal domain.

Belongs to the helicase family. AddA subfamily. As to quaternary structure, heterodimer of AddA and AddB/RexB. The cofactor is Mg(2+).

It catalyses the reaction Couples ATP hydrolysis with the unwinding of duplex DNA by translocating in the 3'-5' direction.. The enzyme catalyses ATP + H2O = ADP + phosphate + H(+). The heterodimer acts as both an ATP-dependent DNA helicase and an ATP-dependent, dual-direction single-stranded exonuclease. Recognizes the chi site generating a DNA molecule suitable for the initiation of homologous recombination. The AddA nuclease domain is required for chi fragment generation; this subunit has the helicase and 3' -&gt; 5' nuclease activities. In Limosilactobacillus fermentum (strain NBRC 3956 / LMG 18251) (Lactobacillus fermentum), this protein is ATP-dependent helicase/nuclease subunit A.